Reading from the N-terminus, the 426-residue chain is Inhibin beta A chain (426 aa).

Positions Met-1–Ser-20 are cleaved as a signal peptide. Positions Ser-21 to Arg-310 are excised as a propeptide. Asn-165 carries N-linked (GlcNAc...) asparagine glycosylation. The interval Lys-259–Ser-288 is disordered. Basic and acidic residues predominate over residues Lys-263–Gly-274. Disulfide bonds link Cys-314-Cys-322, Cys-321-Cys-391, Cys-350-Cys-423, and Cys-354-Cys-425.

This sequence belongs to the TGF-beta family. Dimeric, linked by one or more disulfide bonds. Inhibin A is a dimer of alpha/INHA and beta-A/INHBA. Activin A is a homodimer of beta-A/INHBA. Activin AB is a dimer of beta-A/INHBA and beta-B/INHBB. Interacts with FST and FSTL3; these interactions prevent activin A interaction to its type II receptor. Activin A interacts with ACVR2A. Activin A interacts with BMPR2. Inhibin A interacts with ACVR1; this interaction creates a non-signaling complex (NSC) that inhibits ACVR1-mediated BMP signaling. Inhibin A interacts with ACVR2A.

It is found in the secreted. Its function is as follows. Inhibins/activins are involved in regulating a number of diverse functions such as hypothalamic and pituitary hormone secretion, gonadal hormone secretion, germ cell development and maturation, erythroid differentiation, insulin secretion, nerve cell survival, embryonic axial development or bone growth, depending on their subunit composition. In terms of biological role, activin A is a homodimer of INHBA that plays a role in several essential biological processes including embryonic development, stem cell maintenance and differentiation, haematopoiesis, cell proliferation and tissue fibrosis. Signals through type I (such as ACVR1B or ACVR1C) and type II receptors (such as ACVR2A, ACVR2B or BMPR2) which, upon ligand binding, phosphorylate SMAD2 and SMAD3 intracellular signaling mediators that form a complex with SMAD4, translocate to the nucleus and modulate gene expression. Can also activate alternative non-canonical intracellular signaling pathways including the p38 MAPK, extracellular signal-regulated kinases 1/2 (ERK1/2) and c-Jun N-terminal kinases (JNKs) to modulate cell migration and differentiation. Alternatively, promotes osteoblastic differentiation via ACVRL1-SMAD1/5/9 pathway. In addition, can engage the type I receptor ACVR1 to form an ACVR1-activin A-type II receptor non-signaling complex (NSC) that renders receptors unavailable for engagement with BMPs, hence resulting in an apparent inhibition of ACVR1-mediated BMP signaling. Functionally, inhibin A is a dimer of alpha/INHA and beta-A/INHBA that functions as a feedback regulator in the hypothalamic-pituitary-gonadal (HPG) axis. Inhibits the secretion of FSH from the anterior pituitary gland by acting on pituitary gonadotrope cells. Antagonizes activin A by binding to the proteoglycan, betaglycan, and forming a stable complex with and, thereby, sequestering type II activin receptors while excluding type I receptor. The protein is Inhibin beta A chain (INHBA) of Homo sapiens (Human).